We begin with the raw amino-acid sequence, 66 residues long: Large ribosomal subunit protein bL35 (66 aa).

Composition is skewed to basic residues over residues 1–26 (MPKM…KRSH) and 38–48 (QKQKRKLRKSA). The segment at 1–48 (MPKMKTHKGAAKRFKKTGSGKLKRSHAFTSHLFANKSQKQKRKLRKSA) is disordered.

The protein belongs to the bacterial ribosomal protein bL35 family.

This is Large ribosomal subunit protein bL35 from Halalkalibacterium halodurans (strain ATCC BAA-125 / DSM 18197 / FERM 7344 / JCM 9153 / C-125) (Bacillus halodurans).